Reading from the N-terminus, the 186-residue chain is ADP-ribosylation factor-like protein 8B (186 aa).

M1 carries the post-translational modification N-acetylmethionine. The segment at residues 1 to 19 is an intramembrane region (note=Mediates targeting to membranes); that stretch reads MLALISRLLDWFRSLFWKE. GTP contacts are provided by residues 29-35, 71-75, and 130-133; these read QYSGKTT, DIGGQ, and NKRD. K141 is covalently cross-linked (Glycyl lysine isopeptide (Lys-Gly) (interchain with G-Cter in ubiquitin)).

The protein belongs to the small GTPase superfamily. Arf family. In terms of assembly, interacts with tubulin. Interacts with BORCS5; recruits ARL8B to lysosomes. Interacts with VPS41; the interaction mediates the recruitment of the HOPS complex to lysosomes. Interacts (GTP-bound form) with PLEKHM2 (via RUN domain); the interaction is required to recruit the motor protein kinesin-1 on lysosomes. Interacts (GTP-bound form) with PLEKHM1 (via RUN domain); the interaction is required for PLEKHM1 localization to lysosomes and for ARL8B function in delivery and degradation of endocytic and autophagic cargo in lysosomes. PLEKHM1 and PLEKHM2 compete for interaction with ARL8B. Interacts (GTP-bound form) with RUFY1; the interaction is required for RUFY1 endosomal location. When GTP-bound, interacts with RUFY3 and RUFY4, but not with RUFY1, nor RUFY2. Ubiquitinated at Lys-141 by RNF167, leading to its degradation. In terms of tissue distribution, ubiquitously expressed.

It localises to the late endosome membrane. The protein resides in the lysosome membrane. Its subcellular location is the cytoplasm. The protein localises to the cytoskeleton. It is found in the spindle. It localises to the cell projection. The protein resides in the axon. Its subcellular location is the synapse. The protein localises to the cytolytic granule membrane. It is found in the early endosome membrane. It carries out the reaction GTP + H2O = GDP + phosphate + H(+). Small GTPase which cycles between active GTP-bound and inactive GDP-bound states. In its active state, binds to a variety of effector proteins playing a key role in the regulation of lysosomal positioning which is important for nutrient sensing, natural killer cell-mediated cytotoxicity and antigen presentation. Along with its effectors, orchestrates lysosomal transport and fusion. Localizes specifically to lysosomal membranes and mediates anterograde lysosomal motility by recruiting PLEKHM2, which in turn recruits the motor protein kinesin-1 on lysosomes. Required for lysosomal and cytolytic granule exocytosis. Critical factor involved in NK cell-mediated cytotoxicity. Drives the polarization of cytolytic granules and microtubule-organizing centers (MTOCs) toward the immune synapse between effector NK lymphocytes and target cells. In neurons, mediates the anterograde axonal long-range transport of presynaptic lysosome-related vesicles required for presynaptic biogenesis and synaptic function. Also acts as a regulator of endosome to lysosome trafficking pathways of special significance for host defense. Recruits RUFY1 onto early endosomes regulating endosomes to trans-Golgi network proteins retrieval. Regulates cargo trafficking to lysosomes by binding to PLEKHM1 and recruiting the HOPS subunit VPS41, resulting in functional assembly of the HOPS complex on lysosomal membranes. Plays an important role in cargo delivery to lysosomes for antigen presentation and microbial killing. Directs the intersection of CD1d with lipid antigens in lysosomes, and plays a role in intersecting phagosomes with lysosomes to generate phagolysosomes that kill microbes. Involved in the process of MHC II presentation. Regulates the delivery of antigens to lysosomes and the formation of MHC II-peptide complexes through the recruitment of the HOPS complex to lysosomes allowing the fusion of late endosomes to lysosomes. May play a role in chromosome segregation. Its function is as follows. (Microbial infection) During Mycobacterium tuberculosis (Mtb) infection, is required for plasma membrane repair by controlling the exocytosis of lysosomes in macrophages. ARL8B secretion pathway is crucial to control the type of cell death of the M.tuberculosis-infected macrophages, distinguishing avirulent from virulent Mtb induced necrotic cell death. Functionally, (Microbial infection) During infection, coronaviruses such as SARS-CoV-2 and the chaperone HSPA5/GRP78 are probably co-released through ARL8B-dependent lysosomal exocytic pathway for unconventional egress. In Homo sapiens (Human), this protein is ADP-ribosylation factor-like protein 8B.